The primary structure comprises 326 residues: Pyruvate dehydrogenase E1 component subunit beta (326 aa).

Glu59 contributes to the thiamine diphosphate binding site.

Heterodimer of an alpha and a beta chain. Thiamine diphosphate serves as cofactor.

It catalyses the reaction N(6)-[(R)-lipoyl]-L-lysyl-[protein] + pyruvate + H(+) = N(6)-[(R)-S(8)-acetyldihydrolipoyl]-L-lysyl-[protein] + CO2. Its function is as follows. The pyruvate dehydrogenase complex catalyzes the overall conversion of pyruvate to acetyl-CoA and CO(2). It contains multiple copies of three enzymatic components: pyruvate dehydrogenase (E1), dihydrolipoamide acetyltransferase (E2) and lipoamide dehydrogenase (E3). In Rickettsia felis (strain ATCC VR-1525 / URRWXCal2) (Rickettsia azadi), this protein is Pyruvate dehydrogenase E1 component subunit beta (pdhB).